Here is a 103-residue protein sequence, read N- to C-terminus: Small ribosomal subunit protein uS10 (103 aa).

Belongs to the universal ribosomal protein uS10 family. In terms of assembly, part of the 30S ribosomal subunit.

Its function is as follows. Involved in the binding of tRNA to the ribosomes. The chain is Small ribosomal subunit protein uS10 from Baumannia cicadellinicola subsp. Homalodisca coagulata.